The sequence spans 402 residues: Centromere protein C (402 aa).

K1 participates in a covalent cross-link: Glycyl lysine isopeptide (Lys-Gly) (interchain with G-Cter in SUMO2). Residues 1–12 (KSEQSSFSSSSS) are compositionally biased toward low complexity. A disordered region spans residues 1–118 (KSEQSSFSSS…HQKSQMSVET (118 aa)). S5 carries the phosphoserine modification. The Nuclear localization signal motif lies at 25–42 (QKPPAEKTNQSSKNIGKK). Residues 44 to 53 (APFKKQKRAN) are compositionally biased toward basic residues. Over residues 88 to 118 (PNPSGDTGSSKNQDSMAAQNVHQKSQMSVET) the composition is skewed to polar residues. A Glycyl lysine isopeptide (Lys-Gly) (interchain with G-Cter in SUMO2) cross-link involves residue K186. T193 bears the Phosphothreonine mark. The segment at 196–218 (VRRTMRTRSKPLEYWRGERIDYQ) is MIF2 homology domain II. S222 and S232 each carry phosphoserine. The Nuclear localization signal signature appears at 239–257 (KRKAKGNLGRIITTANRKR). K266 participates in a covalent cross-link: Glycyl lysine isopeptide (Lys-Gly) (interchain with G-Cter in SUMO2). The tract at residues 349-402 (LVFYVNLGYLLCTLHETPYIVTTGDSFYVPSGNYYNIKNLLNEERVLLFTQIKS) is MIF2 homology domain III.

This sequence belongs to the CENP-C/MIF2 family. Oligomer. Component of the CENPA-NAC complex, at least composed of CENPA, CENPC, CENPH, CENPM, CENPN, CENPT and CENPU. The CENPA-NAC complex interacts with the CENPA-CAD complex, composed of CENPI, CENPK, CENPL, CENPO, CENPP, CENPQ, CENPR and CENPS. Binds to DAXX. Interacts with DNMT3B. Interacts directly with CENPA. Identified in a centromere complex containing histones H2A, H2B and H4, and at least CENPA, CENPB, CENPC, CENPT, CENPN, HJURP, SUPT16H, SSRP1 and RSF1. Interacts with MEIKIN.

The protein resides in the nucleus. The protein localises to the chromosome. It localises to the centromere. It is found in the kinetochore. Functionally, component of the CENPA-NAC (nucleosome-associated) complex, a complex that plays a central role in assembly of kinetochore proteins, mitotic progression and chromosome segregation. The CENPA-NAC complex recruits the CENPA-CAD (nucleosome distal) complex and may be involved in incorporation of newly synthesized CENPA into centromeres. CENPC recruits DNA methylation and DNMT3B to both centromeric and pericentromeric satellite repeats and regulates the histone code in these regions. The polypeptide is Centromere protein C (CENPC) (Ovis aries (Sheep)).